Consider the following 145-residue polypeptide: SsrA-binding protein (145 aa).

The protein belongs to the SmpB family.

It localises to the cytoplasm. Functionally, required for rescue of stalled ribosomes mediated by trans-translation. Binds to transfer-messenger RNA (tmRNA), required for stable association of tmRNA with ribosomes. tmRNA and SmpB together mimic tRNA shape, replacing the anticodon stem-loop with SmpB. tmRNA is encoded by the ssrA gene; the 2 termini fold to resemble tRNA(Ala) and it encodes a 'tag peptide', a short internal open reading frame. During trans-translation Ala-aminoacylated tmRNA acts like a tRNA, entering the A-site of stalled ribosomes, displacing the stalled mRNA. The ribosome then switches to translate the ORF on the tmRNA; the nascent peptide is terminated with the 'tag peptide' encoded by the tmRNA and targeted for degradation. The ribosome is freed to recommence translation, which seems to be the essential function of trans-translation. The polypeptide is SsrA-binding protein (Mycoplasmopsis pulmonis (strain UAB CTIP) (Mycoplasma pulmonis)).